The sequence spans 366 residues: Anhydro-N-acetylmuramic acid kinase (366 aa).

12-19 contacts ATP; the sequence is GTSMDGAD.

It belongs to the anhydro-N-acetylmuramic acid kinase family.

It carries out the reaction 1,6-anhydro-N-acetyl-beta-muramate + ATP + H2O = N-acetyl-D-muramate 6-phosphate + ADP + H(+). Its pathway is amino-sugar metabolism; 1,6-anhydro-N-acetylmuramate degradation. It participates in cell wall biogenesis; peptidoglycan recycling. Its function is as follows. Catalyzes the specific phosphorylation of 1,6-anhydro-N-acetylmuramic acid (anhMurNAc) with the simultaneous cleavage of the 1,6-anhydro ring, generating MurNAc-6-P. Is required for the utilization of anhMurNAc either imported from the medium or derived from its own cell wall murein, and thus plays a role in cell wall recycling. The chain is Anhydro-N-acetylmuramic acid kinase from Neisseria meningitidis serogroup C (strain 053442).